A 280-amino-acid chain; its full sequence is Ribosomal RNA-processing protein 7 homolog A (280 aa).

Residues 59-159 (RTLFVLNVPP…TGIHKWISDY (101 aa)) form the RRM domain. Position 99 is a phosphoserine (Ser99).

This sequence belongs to the RRP7 family. In terms of assembly, part of the small subunit (SSU) processome, composed of more than 70 proteins and the RNA chaperone small nucleolar RNA (snoRNA) U3. Interacts with NOL6; required for NOL6 localization to nucleolus.

It localises to the nucleus. It is found in the nucleolus. The protein resides in the cell projection. Its subcellular location is the cilium. The protein localises to the cytoplasm. It localises to the cytoskeleton. It is found in the microtubule organizing center. The protein resides in the centrosome. Nucleolar protein that is involved in ribosomal RNA (rRNA) processing. Also plays a role in primary cilia resorption, and cell cycle progression in neurogenesis and neocortex development. Part of the small subunit (SSU) processome, first precursor of the small eukaryotic ribosomal subunit. During the assembly of the SSU processome in the nucleolus, many ribosome biogenesis factors, an RNA chaperone and ribosomal proteins associate with the nascent pre-rRNA and work in concert to generate RNA folding, modifications, rearrangements and cleavage as well as targeted degradation of pre-ribosomal RNA by the RNA exosome. This chain is Ribosomal RNA-processing protein 7 homolog A (RRP7A), found in Pongo abelii (Sumatran orangutan).